The sequence spans 404 residues: Bifunctional enzyme IspD/IspF (404 aa).

A 2-C-methyl-D-erythritol 4-phosphate cytidylyltransferase region spans residues 1–243 (MQAEEQFSCG…KLTRMAIPDV (243 aa)). The 2-C-methyl-D-erythritol 2,4-cyclodiphosphate synthase stretch occupies residues 244 to 404 (RTGNGYDVHQ…TVVYASGGDA (161 aa)). A divalent metal cation is bound by residues Asp-250 and His-252. Residues 250-252 (DVH) and 276-277 (HS) contribute to the 4-CDP-2-C-methyl-D-erythritol 2-phosphate site. Position 284 (His-284) interacts with a divalent metal cation. 4-CDP-2-C-methyl-D-erythritol 2-phosphate is bound by residues 298–300 (DIG), 374–377 (TTNE), Phe-381, and Arg-384.

It in the N-terminal section; belongs to the IspD/TarI cytidylyltransferase family. IspD subfamily. In the C-terminal section; belongs to the IspF family. A divalent metal cation is required as a cofactor.

The catalysed reaction is 2-C-methyl-D-erythritol 4-phosphate + CTP + H(+) = 4-CDP-2-C-methyl-D-erythritol + diphosphate. It catalyses the reaction 4-CDP-2-C-methyl-D-erythritol 2-phosphate = 2-C-methyl-D-erythritol 2,4-cyclic diphosphate + CMP. It participates in isoprenoid biosynthesis; isopentenyl diphosphate biosynthesis via DXP pathway; isopentenyl diphosphate from 1-deoxy-D-xylulose 5-phosphate: step 2/6. It functions in the pathway isoprenoid biosynthesis; isopentenyl diphosphate biosynthesis via DXP pathway; isopentenyl diphosphate from 1-deoxy-D-xylulose 5-phosphate: step 4/6. Bifunctional enzyme that catalyzes the formation of 4-diphosphocytidyl-2-C-methyl-D-erythritol from CTP and 2-C-methyl-D-erythritol 4-phosphate (MEP) (IspD), and catalyzes the conversion of 4-diphosphocytidyl-2-C-methyl-D-erythritol 2-phosphate (CDP-ME2P) to 2-C-methyl-D-erythritol 2,4-cyclodiphosphate (ME-CPP) with a corresponding release of cytidine 5-monophosphate (CMP) (IspF). The protein is Bifunctional enzyme IspD/IspF of Sinorhizobium medicae (strain WSM419) (Ensifer medicae).